Here is a 259-residue protein sequence, read N- to C-terminus: Small ribosomal subunit protein mS23 (259 aa).

Belongs to the mitochondrion-specific ribosomal protein mS23 family. Component of the mitochondrial small ribosomal subunit.

The protein resides in the mitochondrion. This is Small ribosomal subunit protein mS23 (RSM25) from Pyricularia oryzae (strain 70-15 / ATCC MYA-4617 / FGSC 8958) (Rice blast fungus).